A 427-amino-acid chain; its full sequence is MAEQDVENELLDYDEDEEPQVPQESTPAPPKKDVKGSYVSIHSSGFRDFLLKPELLRAIVDCGFEHPSEVQHECIPQAILGMDVLCQAKSGMGKTAVFVLATLQQIEPINGQVSVLVMCHTRELAFQISKEYERFSKYMPSVKVSVFFGGLSIKKDEDVLKKNCPHVVVGTPGRILALVRSRSLNLRNVKHFVLDECDKMLEQLDMRRDVQEIFRLTPHEKQCMMFSATLSKEIRPVCRKFMQDPMEVFVDDETKLTLHGLQQYYVKLKDSEKNRKLFDLLDVLEFNQVVIFVKSVQRCMALAQLLVEQNFPAIAIHRGMAQEERLSRYQQFKDFQRRILVATNLFGRGMDIERVNIVFNYDMPEDSDTYLHRVARAGRFGTKGLAVTFVSDENDAKILNDVQDRFEVNVAELPEEIDISTYIEQSR.

A compositionally biased stretch (acidic residues) spans 1-19 (MAEQDVENELLDYDEDEEP). The segment at 1–35 (MAEQDVENELLDYDEDEEPQVPQESTPAPPKKDVK) is disordered. Position 2 is an N-acetylalanine (Ala-2). Lys-31 is covalently cross-linked (Glycyl lysine isopeptide (Lys-Gly) (interchain with G-Cter in SUMO2)). Lys-35 bears the N6-acetyllysine; alternate mark. Lys-35 participates in a covalent cross-link: Glycyl lysine isopeptide (Lys-Gly) (interchain with G-Cter in SUMO2); alternate. Ser-37 is modified (phosphoserine). The Q motif motif lies at 44 to 72 (SGFRDFLLKPELLRAIVDCGFEHPSEVQH). The 174-residue stretch at 75–248 (IPQAILGMDV…RKFMQDPMEV (174 aa)) folds into the Helicase ATP-binding domain. 88-95 (AKSGMGKT) is a binding site for ATP. Residues Lys-154 and Lys-162 each participate in a glycyl lysine isopeptide (Lys-Gly) (interchain with G-Cter in SUMO2) cross-link. Thr-171 is modified (phosphothreonine). The DECD box motif lies at 195 to 198 (DECD). Residues Lys-240 and Lys-255 each participate in a glycyl lysine isopeptide (Lys-Gly) (interchain with G-Cter in SUMO2) cross-link. In terms of domain architecture, Helicase C-terminal spans 260–421 (GLQQYYVKLK…ELPEEIDIST (162 aa)). The residue at position 426 (Ser-426) is a Phosphoserine.

The protein belongs to the DEAD box helicase family. DECD subfamily. As to quaternary structure, binds ALYREF/THOC4 and DDX39B/BAT1. Interacts with the apo-AREX complex component SARNP. Interacts with MX1. Interacts with MCM3AP isoform GANP. Interacts with ECD. Interacts with PHAX; this interaction stimulates PHAX RNA binding activity. SUMOylated by RANBP2; SUMOylation modification affects its ability to bind RNA.

It localises to the nucleus. It is found in the cytoplasm. The enzyme catalyses ATP + H2O = ADP + phosphate + H(+). Its function is as follows. Helicase that plays an essential role in mRNA export and is involved in multiple steps in RNA metabolism including alternative splicing. Regulates nuclear mRNA export to the cytoplasm through association with ECD. Also involved in spliceosomal uridine-rich small nuclear RNA (U snRNA) export by stimulating the RNA binding of adapter PHAX. Plays a role in the negative regulation of type I IFN production by increasing the nuclear retention of antiviral transcripts and thus reducing their protein expression. Independently of the interferon pathway, plays an antiviral role against alphaviruses by binding to a 5' conserved sequence element in the viral genomic RNA. The sequence is that of ATP-dependent RNA helicase DDX39A (Ddx39a) from Rattus norvegicus (Rat).